The chain runs to 584 residues: Optineurin (584 aa).

Positions 1–32 (MSHQPLSCLTEKGDSPCETPGNGPSNMVHPSL) are disordered. Residues 38–180 (EELLQQMKEL…VSELQLKLNS (143 aa)) adopt a coiled-coil conformation. Residues 58 to 219 (MKLNNQAMKG…TPTRTDPISL (162 aa)) are interaction with Rab8. Residues 186 to 191 (DSFVEI) carry the LIR motif. Residue S187 is modified to Phosphoserine. Coiled-coil stretches lie at residues 243-278 (CLRE…HSST) and 307-511 (IQVT…DIEE). Residues 267 to 295 (DFEKKANGHSSTEKQTARRADREKEDKGQ) show a composition bias toward basic and acidic residues. The interval 267–302 (DFEKKANGHSSTEKQTARRADREKEDKGQESVGSEV) is disordered. S345 carries the phosphoserine modification. The tract at residues 414 to 584 (TKQQAEKVDK…LQIHVMDCII (171 aa)) is interaction with HD. The segment at 415 to 524 (KQQAEKVDKM…RQSLMEMQCR (110 aa)) is interaction with MYO6. The short motif at 477 to 482 (DFHAER) is the UBAN element. S530 bears the Phosphoserine mark. The CCHC NOA-type zinc-finger motif lies at 554–584 (PRSIPIHSCPKCGEVLPDIDTLQIHVMDCII). Zn(2+) contacts are provided by C562, C565, H578, and C582.

As to quaternary structure, self-associates. Interacts with HD, GTF3A, TRAF3, TBK1 and MYO6. Interacts (via UBAN) with ubiquitinated TFRC. Interacts with active GTP-bound Rab8 (RAB8A and/or RAB8B). Interacts with TBC1D17. Binds to linear ubiquitin chains. Interacts with LC3 family members MAP1LC3A, MAP1LC3B, GABARAP, GABARAPL1 and GABARAPL2; OPTN phosphorylation increases the association (at least with MAP1LC3B). Interacts with RAB12; the interaction may be indirect. Interacts with TBK1; this interaction leads to the Golgi localization of TBK1 and its subsequent activation. Interacts with palmitoyltransferase ZDHHC17/HIP14; the interaction does not lead to palmitoylation of OPTN. Interacts with CYLD. Interacts with TOM1; the interaction is indirect and is mediated by MYO6, which acts as a bridge between TOM1 and OPTN. Interacts with USP12; the interaction is independent of USP12 deubiquitinase activity and may be involved in regulation of autophagic flux. Post-translationally, phosphorylated by TBK1, leading to restrict bacterial proliferation in case of infection. In eye, it is expressed in anterior segment, retina, and optic nerve blood vessels (at protein level). Highly expressed in adult liver, heart and testis.

The protein resides in the cytoplasm. It is found in the perinuclear region. The protein localises to the golgi apparatus. It localises to the trans-Golgi network. Its subcellular location is the cytoplasmic vesicle. The protein resides in the autophagosome. It is found in the recycling endosome. Functionally, plays an important role in the maintenance of the Golgi complex, in membrane trafficking, in exocytosis, through its interaction with myosin VI and Rab8. Links myosin VI to the Golgi complex and plays an important role in Golgi ribbon formation. Plays a role in the activation of innate immune response during viral infection. Mechanistically, recruits TBK1 at the Golgi apparatus, promoting its trans-phosphorylation after RLR or TLR3 stimulation. In turn, activated TBK1 phosphorylates its downstream partner IRF3 to produce IFN-beta. Plays a neuroprotective role in the eye and optic nerve. May act by regulating membrane trafficking and cellular morphogenesis via a complex that contains Rab8 and huntingtin (HD). Mediates the interaction of Rab8 with the probable GTPase-activating protein TBC1D17 during Rab8-mediated endocytic trafficking, such as that of transferrin receptor (TFRC/TfR); regulates Rab8 recruitment to tubules emanating from the endocytic recycling compartment. Autophagy receptor that interacts directly with both the cargo to become degraded and an autophagy modifier of the MAP1 LC3 family; targets ubiquitin-coated bacteria (xenophagy), such as cytoplasmic Salmonella enterica, and appears to function in the same pathway as SQSTM1 and CALCOCO2/NDP52. This chain is Optineurin (Optn), found in Mus musculus (Mouse).